The sequence spans 213 residues: Ribosomal RNA small subunit methyltransferase G (213 aa).

S-adenosyl-L-methionine is bound by residues Gly-75, Phe-80, 128-129 (IE), and Arg-144.

The protein belongs to the methyltransferase superfamily. RNA methyltransferase RsmG family.

It is found in the cytoplasm. The enzyme catalyses guanosine(527) in 16S rRNA + S-adenosyl-L-methionine = N(7)-methylguanosine(527) in 16S rRNA + S-adenosyl-L-homocysteine. Its function is as follows. Specifically methylates the N7 position of guanine in position 527 of 16S rRNA. The sequence is that of Ribosomal RNA small subunit methyltransferase G from Brucella abortus (strain S19).